The chain runs to 131 residues: MVMTDPIADLLTRIRNANKARHPKVDMPSSKLKLEILKVMKQEGFIKDFSVNKDKFPKITVTLKYSDTNERVIKGLKRISKPGLRVYASIDNLPRVLNGLGVALVSTSKGILTDREARQQQIGGEVLAYVW.

The protein belongs to the universal ribosomal protein uS8 family. In terms of assembly, part of the 30S ribosomal subunit. Contacts proteins S5 and S12.

Its function is as follows. One of the primary rRNA binding proteins, it binds directly to 16S rRNA central domain where it helps coordinate assembly of the platform of the 30S subunit. The chain is Small ribosomal subunit protein uS8 from Acholeplasma laidlawii (strain PG-8A).